A 394-amino-acid chain; its full sequence is ATP phosphoribosyltransferase regulatory subunit (394 aa).

This sequence belongs to the class-II aminoacyl-tRNA synthetase family. HisZ subfamily. As to quaternary structure, heteromultimer composed of HisG and HisZ subunits.

The protein resides in the cytoplasm. The protein operates within amino-acid biosynthesis; L-histidine biosynthesis; L-histidine from 5-phospho-alpha-D-ribose 1-diphosphate: step 1/9. Required for the first step of histidine biosynthesis. May allow the feedback regulation of ATP phosphoribosyltransferase activity by histidine. This chain is ATP phosphoribosyltransferase regulatory subunit, found in Saccharophagus degradans (strain 2-40 / ATCC 43961 / DSM 17024).